Reading from the N-terminus, the 430-residue chain is Glutamate-1-semialdehyde 2,1-aminomutase 2 (430 aa).

Lys269 is subject to N6-(pyridoxal phosphate)lysine.

The protein belongs to the class-III pyridoxal-phosphate-dependent aminotransferase family. HemL subfamily. In terms of assembly, homodimer. The cofactor is pyridoxal 5'-phosphate.

The protein resides in the cytoplasm. The enzyme catalyses (S)-4-amino-5-oxopentanoate = 5-aminolevulinate. The protein operates within porphyrin-containing compound metabolism; protoporphyrin-IX biosynthesis; 5-aminolevulinate from L-glutamyl-tRNA(Glu): step 2/2. The chain is Glutamate-1-semialdehyde 2,1-aminomutase 2 from Lysinibacillus sphaericus (strain C3-41).